Consider the following 475-residue polypeptide: Lipid II flippase MurJ (475 aa).

Over 1–2 the chain is Cytoplasmic; it reads MS. The chain crosses the membrane as a helical span at residues 3–23; it reads ILFSSILFSIATFFSRILGLF. Topologically, residues 24–35 are periplasmic; that stretch reads RDVLFAKYFGVS. The helical transmembrane segment at 36-56 threads the bilayer; that stretch reads YELDAYFIAIMFPFFLRKVFG. Residues 57 to 78 lie on the Cytoplasmic side of the membrane; the sequence is EGAMSSAFVPLYSEKSGEEKDK. Residues 79-99 traverse the membrane as a helical segment; it reads FLSSVINGFSLIILALVILSY. Residues 100-123 are Periplasmic-facing; the sequence is FFPELIINLFGAGSSHETKILAKK. Residues 124–144 traverse the membrane as a helical segment; sequence LLLITSPSIYFIFLWAISYSI. The Cytoplasmic portion of the chain corresponds to 145–150; sequence LNTNNK. The chain crosses the membrane as a helical span at residues 151–171; that stretch reads FFWPALTPSISNITIIIGTFL. The Periplasmic segment spans residues 172–175; the sequence is STKY. Residues 176–196 traverse the membrane as a helical segment; that stretch reads GIISPTIGFLIGSILMFFSII. Residues 197-213 lie on the Cytoplasmic side of the membrane; it reads KSIIKHKYYFTIKHFPH. A helical membrane pass occupies residues 214 to 238; the sequence is FLKLFFPTFMTMVVSQINTVVDMNV. Residues 239 to 249 lie on the Periplasmic side of the membrane; the sequence is VSFYDKGSISY. A helical membrane pass occupies residues 250-271; the sequence is LQYASRFYLLPYGLFAVSVSTV. Over 272 to 287 the chain is Cytoplasmic; sequence VLSKISNDRKNFNYHL. Residues 288-308 traverse the membrane as a helical segment; sequence NDALKTTLFFTIPSMVGLIFL. At 309 to 332 the chain is on the periplasmic side; sequence STPIIRFFYEHGAFTSKDTLITSK. A helical membrane pass occupies residues 333 to 353; sequence ILIAYTLGLPFYGIYSTISRS. At 354 to 362 the chain is on the cytoplasmic side; that stretch reads YHAIKNTKT. The helical transmembrane segment at 363–383 threads the bilayer; sequence PFIAATIVSLSNIILDIIFGL. The Periplasmic portion of the chain corresponds to 384–386; sequence KYG. A helical transmembrane segment spans residues 387-407; it reads PIGVALATSIAGIIGVLYLLF. The Cytoplasmic portion of the chain corresponds to 408 to 416; it reads SVKTFPIKD. A helical transmembrane segment spans residues 417-437; sequence FLKISLNSLIMLFVIYLTDFT. The Periplasmic portion of the chain corresponds to 438–440; the sequence is DNE. The chain crosses the membrane as a helical span at residues 441 to 461; that stretch reads FWFLIQILIGILVYLIFSSIF. Topologically, residues 462-475 are cytoplasmic; the sequence is YRDLIRRFLYARKK.

The protein belongs to the MurJ/MviN family.

Its subcellular location is the cell inner membrane. It functions in the pathway cell wall biogenesis; peptidoglycan biosynthesis. In terms of biological role, involved in peptidoglycan biosynthesis. Transports lipid-linked peptidoglycan precursors from the inner to the outer leaflet of the cytoplasmic membrane. This Thermosipho africanus (strain TCF52B) protein is Lipid II flippase MurJ.